A 204-amino-acid chain; its full sequence is LexA repressor (204 aa).

The segment at residues 27–47 (VREIGEAVGLASSSTVHGHLA) is a DNA-binding region (H-T-H motif). Active-site for autocatalytic cleavage activity residues include Ser-126 and Lys-164.

The protein belongs to the peptidase S24 family. Homodimer.

The enzyme catalyses Hydrolysis of Ala-|-Gly bond in repressor LexA.. In terms of biological role, represses a number of genes involved in the response to DNA damage (SOS response), including recA and lexA. In the presence of single-stranded DNA, RecA interacts with LexA causing an autocatalytic cleavage which disrupts the DNA-binding part of LexA, leading to derepression of the SOS regulon and eventually DNA repair. The chain is LexA repressor from Listeria innocua serovar 6a (strain ATCC BAA-680 / CLIP 11262).